Consider the following 459-residue polypeptide: Cysteine--tRNA ligase (459 aa).

C27 contacts Zn(2+). The 'HIGH' region motif lies at 29–39; it reads PTVYNFVHIGN. 3 residues coordinate Zn(2+): C211, H236, and E240. Positions 269 to 273 match the 'KMSKS' region motif; it reads KMSKS. An ATP-binding site is contributed by K272.

This sequence belongs to the class-I aminoacyl-tRNA synthetase family. In terms of assembly, monomer. It depends on Zn(2+) as a cofactor.

The protein resides in the cytoplasm. The catalysed reaction is tRNA(Cys) + L-cysteine + ATP = L-cysteinyl-tRNA(Cys) + AMP + diphosphate. The polypeptide is Cysteine--tRNA ligase (Ehrlichia canis (strain Jake)).